Here is a 544-residue protein sequence, read N- to C-terminus: Putative ligase Rv1013 (544 aa).

Residue Lys-528 forms an Isoglutamyl lysine isopeptide (Lys-Gln) (interchain with Q-Cter in protein Pup) linkage.

Belongs to the ATP-dependent AMP-binding enzyme family. In terms of processing, pupylated at Lys-528 by the prokaryotic ubiquitin-like protein Pup, which probably leads to its degradation by the proteasome.

The polypeptide is Putative ligase Rv1013 (pks16) (Mycobacterium tuberculosis (strain ATCC 25618 / H37Rv)).